Consider the following 202-residue polypeptide: Glycerol-3-phosphate acyltransferase 1 (202 aa).

5 helical membrane passes run 8–28 (AGMI…MSTG), 85–105 (LSLT…IWPL), 122–142 (ILVV…FVLA), 146–166 (QFTL…LIMA), and 173–190 (AGLA…RKNI).

It belongs to the PlsY family. In terms of assembly, probably interacts with PlsX.

Its subcellular location is the cell membrane. The enzyme catalyses an acyl phosphate + sn-glycerol 3-phosphate = a 1-acyl-sn-glycero-3-phosphate + phosphate. It functions in the pathway lipid metabolism; phospholipid metabolism. In terms of biological role, catalyzes the transfer of an acyl group from acyl-phosphate (acyl-PO(4)) to glycerol-3-phosphate (G3P) to form lysophosphatidic acid (LPA). This enzyme utilizes acyl-phosphate as fatty acyl donor, but not acyl-CoA or acyl-ACP. This is Glycerol-3-phosphate acyltransferase 1 from Desulfitobacterium hafniense (strain Y51).